The sequence spans 165 residues: E3 ubiquitin-protein ligase RNF181 (165 aa).

Residues 88–129 (CPVCLLEFEAEETVIEMPCHHLFHSNCILPWLSKTNSCPLCR) form an RING-type; atypical zinc finger. A disordered region spans residues 136–165 (DDSYEEHKKDKARRQQQQHRLENLHGAMYT). At T165 the chain carries Phosphothreonine.

This sequence belongs to the RNF181 family. Directly interacts with ITGA2B and, as a result, with integrin ITGA2B/ITGB3. There is no evidence that integrin ITGA2B/ITGB3 is an endogenous substrate for RNF181-directed ubiquitination. Auto-ubiquitinated as part of the enzymatic reaction.

The catalysed reaction is S-ubiquitinyl-[E2 ubiquitin-conjugating enzyme]-L-cysteine + [acceptor protein]-L-lysine = [E2 ubiquitin-conjugating enzyme]-L-cysteine + N(6)-ubiquitinyl-[acceptor protein]-L-lysine.. Its pathway is protein modification; protein ubiquitination. Its function is as follows. E3 ubiquitin-protein ligase which accepts ubiquitin from an E2 ubiquitin-conjugating enzyme in the form of a thioester and then directly transfers the ubiquitin to targeted substrates. Catalyzes monoubiquitination of 26S proteasome subunit PSMC2/RPT1. The polypeptide is E3 ubiquitin-protein ligase RNF181 (Mus musculus (Mouse)).